A 263-amino-acid chain; its full sequence is 3-methyl-2-oxobutanoate hydroxymethyltransferase (263 aa).

Residues aspartate 45 and aspartate 84 each coordinate Mg(2+). 3-methyl-2-oxobutanoate contacts are provided by residues 45–46, aspartate 84, and lysine 112; that span reads DS. Glutamate 114 contributes to the Mg(2+) binding site. Glutamate 181 acts as the Proton acceptor in catalysis.

This sequence belongs to the PanB family. In terms of assembly, homodecamer; pentamer of dimers. Mg(2+) is required as a cofactor.

The protein localises to the cytoplasm. It catalyses the reaction 3-methyl-2-oxobutanoate + (6R)-5,10-methylene-5,6,7,8-tetrahydrofolate + H2O = 2-dehydropantoate + (6S)-5,6,7,8-tetrahydrofolate. The protein operates within cofactor biosynthesis; (R)-pantothenate biosynthesis; (R)-pantoate from 3-methyl-2-oxobutanoate: step 1/2. In terms of biological role, catalyzes the reversible reaction in which hydroxymethyl group from 5,10-methylenetetrahydrofolate is transferred onto alpha-ketoisovalerate to form ketopantoate. The polypeptide is 3-methyl-2-oxobutanoate hydroxymethyltransferase (Buchnera aphidicola subsp. Acyrthosiphon pisum (strain APS) (Acyrthosiphon pisum symbiotic bacterium)).